The following is a 454-amino-acid chain: MPREIITIQAGQCGNNVGSQFWQQLCLEHGISQDGNLEEFATEGGDRKDVFFYQSDDTRYIPRAILLDLEPRVLNGIQSGPYKNIYNPENFFIGQQGIGAGNNWGAGYAAGEVVQEEVFDMIDREADGSDSLEGFMFLHSIAGGTGSGLGSFLLERMNDRFPKKLIQTYSVFPDTQAADVVVNPYNSLLAMRRLTQNADSVVVLDNAALSRIVADRLHVQEPSFQQTNRLVSTVMSASTTTLRYPGYMHNDLVGIIASLIPTPRSHFLLTSYTPFTGDNIDQAKTVRKTTVLDVMRRLLQPKNRMVSINPSKSSCYISILNIIQGEADPTDVHKSLLRIRERRLASFIPWGPASIQVALTKKSPYIQNTHRVSGLMLANHTSVATLFKRIVQQYDRLRKRNAFLEQYKKEAPFQDGLDEFDEARAVVMDLVGEYEAAERENYLDPDAGKDEVGV.

142–148 (AGGTGSG) is a binding site for GTP.

This sequence belongs to the tubulin family.

It localises to the cytoplasm. The protein localises to the cytoskeleton. It is found in the microtubule organizing center. The protein resides in the spindle pole body. Its function is as follows. Tubulin is the major constituent of microtubules. The gamma chain is found at microtubule organizing centers (MTOC) such as the spindle pole or the centrosome, suggesting that it is involved in the minus-end nucleation of microtubule assembly. Interacts physically with beta-tubulin and is involved in microtubule function. In Emericella nidulans (strain FGSC A4 / ATCC 38163 / CBS 112.46 / NRRL 194 / M139) (Aspergillus nidulans), this protein is Tubulin gamma chain (mipA).